We begin with the raw amino-acid sequence, 706 residues long: Elongation factor G (706 aa).

Residues 12 to 288 (EKTRNIGIMA…GVTNYLPSPN (277 aa)) enclose the tr-type G domain. GTP is bound by residues 21–28 (AHIDAGKT), 85–89 (DTPGH), and 139–142 (NKMD). Residues 288 to 309 (NDVPAITGHHPQDKEEDITRHP) form a disordered region. Residues 297–309 (HPQDKEEDITRHP) are compositionally biased toward basic and acidic residues.

Belongs to the TRAFAC class translation factor GTPase superfamily. Classic translation factor GTPase family. EF-G/EF-2 subfamily.

The protein resides in the cytoplasm. Functionally, catalyzes the GTP-dependent ribosomal translocation step during translation elongation. During this step, the ribosome changes from the pre-translocational (PRE) to the post-translocational (POST) state as the newly formed A-site-bound peptidyl-tRNA and P-site-bound deacylated tRNA move to the P and E sites, respectively. Catalyzes the coordinated movement of the two tRNA molecules, the mRNA and conformational changes in the ribosome. This is Elongation factor G from Salinibacter ruber (strain DSM 13855 / M31).